We begin with the raw amino-acid sequence, 165 residues long: Nucleotide-binding protein Ccon26_01810 (165 aa).

This sequence belongs to the YajQ family.

Functionally, nucleotide-binding protein. This is Nucleotide-binding protein Ccon26_01810 from Campylobacter concisus (strain 13826).